Consider the following 291-residue polypeptide: Phosphate-binding protein PstS 2 (291 aa).

Positions 1 to 21 (MKFKKMLTLAAIGLSGFGLVA) are cleaved as a signal peptide. The N-palmitoyl cysteine moiety is linked to residue Cys22. Cys22 is lipidated: S-diacylglycerol cysteine.

Belongs to the PstS family. The complex is composed of two ATP-binding proteins (PstB), two transmembrane proteins (PstC and PstA) and a solute-binding protein (PstS).

It is found in the cell membrane. In terms of biological role, part of the ABC transporter complex PstSACB involved in phosphate import. The sequence is that of Phosphate-binding protein PstS 2 (pstS2) from Streptococcus pneumoniae serotype 4 (strain ATCC BAA-334 / TIGR4).